Reading from the N-terminus, the 415-residue chain is Serine hydroxymethyltransferase (415 aa).

(6S)-5,6,7,8-tetrahydrofolate-binding positions include Leu-115 and 119 to 121 (GHL). Lys-224 is subject to N6-(pyridoxal phosphate)lysine. 348 to 350 (SPF) serves as a coordination point for (6S)-5,6,7,8-tetrahydrofolate.

Belongs to the SHMT family. Homodimer. Requires pyridoxal 5'-phosphate as cofactor.

It is found in the cytoplasm. It carries out the reaction (6R)-5,10-methylene-5,6,7,8-tetrahydrofolate + glycine + H2O = (6S)-5,6,7,8-tetrahydrofolate + L-serine. It functions in the pathway one-carbon metabolism; tetrahydrofolate interconversion. Its pathway is amino-acid biosynthesis; glycine biosynthesis; glycine from L-serine: step 1/1. Its function is as follows. Catalyzes the reversible interconversion of serine and glycine with tetrahydrofolate (THF) serving as the one-carbon carrier. This reaction serves as the major source of one-carbon groups required for the biosynthesis of purines, thymidylate, methionine, and other important biomolecules. Also exhibits THF-independent aldolase activity toward beta-hydroxyamino acids, producing glycine and aldehydes, via a retro-aldol mechanism. This chain is Serine hydroxymethyltransferase, found in Latilactobacillus sakei subsp. sakei (strain 23K) (Lactobacillus sakei subsp. sakei).